A 295-amino-acid polypeptide reads, in one-letter code: Small ribosomal subunit biogenesis GTPase RsgA (295 aa).

A CP-type G domain is found at 68–228 (KNLLTKPHVA…VVDTPGFANL (161 aa)). GTP contacts are provided by residues 117-120 (NKMD) and 170-178 (GLSGVGKSS). The Zn(2+) site is built by Cys-250, Cys-255, His-257, and Cys-263.

The protein belongs to the TRAFAC class YlqF/YawG GTPase family. RsgA subfamily. In terms of assembly, monomer. Associates with 30S ribosomal subunit, binds 16S rRNA. The cofactor is Zn(2+).

The protein resides in the cytoplasm. One of several proteins that assist in the late maturation steps of the functional core of the 30S ribosomal subunit. Helps release RbfA from mature subunits. May play a role in the assembly of ribosomal proteins into the subunit. Circularly permuted GTPase that catalyzes slow GTP hydrolysis, GTPase activity is stimulated by the 30S ribosomal subunit. The protein is Small ribosomal subunit biogenesis GTPase RsgA of Thermotoga maritima (strain ATCC 43589 / DSM 3109 / JCM 10099 / NBRC 100826 / MSB8).